The chain runs to 478 residues: MSVCSEIDYALYTELKKFLNSQPLFLFNADKNFVEVVPSSSFKFYIPIGVFSNSDVALIRPVHTTCTNHIESADATFPNLYPLQKRVVAEVTTSMRQKLSTHRPMYMTLHLSCGFGKTITACYLMVVHRRKTVICVPNKMLIHQWKAAVELTKLSYIISTDGVSVLLKQLRTKTADVLIIVSRHLSNDYFCKKIHDEYDTFILDESHMYNLMNNSALTKFLTFYPPRICYFLTATPRLANRIYCNDVVNVLKVSTLMKRLKIVEYFFEPYSTECIRQMAKHLNTENNKYHIYTEKILAEDLPRNNLIVDTVSREFKHGLVERVIVVVKLRKHMTFFYDKFVEEFGTDYVYLGDAKNKDTSAVVKSLLQKKKFIFVSTSHYSGTGLDIPSLDSLVICCAVLNSMQIEQLLGRVCRESESVKKTVFLFPNTSIREIKHSLGFFTERIVSVSTDKLGFQQEGKEGTKEEPALTKAFSSQIR.

Positions 98–254 (KLSTHRPMYM…NDVVNVLKVS (157 aa)) constitute a Helicase ATP-binding domain. 111-118 (LSCGFGKT) provides a ligand contact to ATP. The DESH box motif lies at 204 to 207 (DESH). The region spanning 302-454 (PRNNLIVDTV…IVSVSTDKLG (153 aa)) is the Helicase C-terminal domain. The disordered stretch occupies residues 456-478 (QQEGKEGTKEEPALTKAFSSQIR). Over residues 458-468 (EGKEGTKEEPA) the composition is skewed to basic and acidic residues.

Belongs to the helicase family. Poxviruses subfamily. As to quaternary structure, interacts with G2. Might be part of a transcription complex composed at least of G2, A18, and H5.

It localises to the virion. DNA helicase which seems to act as a postreplicative transcription termination factor. Involved in ATP-dependent release of nascent RNA. Forms a stable complex with single-stranded DNA, and to a lesser extent RNA. This Oryctolagus cuniculus (Rabbit) protein is Transcript termination protein A18.